The primary structure comprises 124 residues: Small ribosomal subunit protein uS13 (124 aa).

The segment at 99-124 (PCRGQKTKTNARTCKGPKKTVANKKK) is disordered. A compositionally biased stretch (basic residues) spans 113 to 124 (KGPKKTVANKKK).

The protein belongs to the universal ribosomal protein uS13 family. In terms of assembly, part of the 30S ribosomal subunit. Forms a loose heterodimer with protein S19. Forms two bridges to the 50S subunit in the 70S ribosome.

Its function is as follows. Located at the top of the head of the 30S subunit, it contacts several helices of the 16S rRNA. In the 70S ribosome it contacts the 23S rRNA (bridge B1a) and protein L5 of the 50S subunit (bridge B1b), connecting the 2 subunits; these bridges are implicated in subunit movement. Contacts the tRNAs in the A and P-sites. This is Small ribosomal subunit protein uS13 from Lachnospira eligens (strain ATCC 27750 / DSM 3376 / VPI C15-48 / C15-B4) (Eubacterium eligens).